A 508-amino-acid polypeptide reads, in one-letter code: WD repeat-containing protein DDB_G0290555 (508 aa).

WD repeat units follow at residues 32–74, 159–198, 252–292, and 295–334; these read TSEL…LIGE, NVAT…KTYS, FSKH…QVGS, and DSAG…MLHK. Positions 368–508 are disordered; the sequence is ENKNRINNDD…KKFAGLKKRK (141 aa). Acidic residues predominate over residues 399–435; that stretch reads MDSDDDIEDGDDNDVEFPMEADSDDSDFDLGNSDDDN. The segment covering 436–446 has biased composition (basic and acidic residues); sequence ISVKKENKGDS. Positions 447–456 are enriched in acidic residues; that stretch reads DDSDDDSDED. Low complexity predominate over residues 471–493; it reads NNNNNNNKGKNNKGKNNSSTKKT. Positions 497-508 are enriched in basic residues; the sequence is LKKKFAGLKKRK.

The protein is WD repeat-containing protein DDB_G0290555 of Dictyostelium discoideum (Social amoeba).